We begin with the raw amino-acid sequence, 795 residues long: ATP-dependent RNA helicase DHX15 (795 aa).

The tract at residues 1 to 108 is disordered; it reads MSKRHRLDLG…HSTHAGHAGH (108 aa). Ser15 carries the post-translational modification Phosphoserine. Basic and acidic residues predominate over residues 20 to 62; sequence AGTDGKDRDRDRDREDRSKDRDRERDRGDREREREKEKEKELR. The span at 79-108 shows a compositional bias: low complexity; that stretch reads ASHSAHSTHSAHSTHSTHSAHSTHAGHAGH. The region spanning 147–313 is the Helicase ATP-binding domain; the sequence is TDILVRHQSF…FDNCPLLTIP (167 aa). 160–167 is a binding site for ATP; it reads GETGSGKT. Residues 260–263 carry the DEAH box motif; the sequence is DEAH. Positions 338 to 518 constitute a Helicase C-terminal domain; that stretch reads TVIQIHMCEE…SVVLQLKKLG (181 aa). N6-acetyllysine is present on Lys488. Lys786 participates in a covalent cross-link: Glycyl lysine isopeptide (Lys-Gly) (interchain with G-Cter in SUMO2).

This sequence belongs to the DEAD box helicase family. DEAH subfamily. DDX15/PRP43 sub-subfamily. Component of the U11/U12 snRNPs that are part of the U12-type spliceosome. Identified in the Intron Large spliceosome complex (IL, also named intron lariat spliceosome), a post-mRNA release spliceosomal complex containing the excised intron, U2, U5 and U6 snRNPs, and splicing factors; the association may be transient. The IL complex exists in two distinct conformations, one with the DHX15 (ILS2) and one without (ILS1). Interacts with TFIP11 (via G-patch domain); indicative for a recruitment to the IL complex. Interacts with SSB/La. Interacts with GPATCH2 (via G-patch domain); promoting the RNA helicase activity. Interacts with NKRF (via G-patch domain); promoting the RNA helicase activity. Interacts with NLRP6. As to expression, ubiquitous.

It is found in the nucleus. The protein localises to the nucleolus. It carries out the reaction ATP + H2O = ADP + phosphate + H(+). ATPase activity is enhanced upon binding to G-patch domain-containing proteins. G-patch domain-containing proteins act like a brace that tethers mobile sections of DHX15 together, stabilizing a functional conformation with high RNA affinity, thereby promoting the ATPase activity. In terms of biological role, RNA helicase involved in mRNA processing and antiviral innate immunity. Pre-mRNA processing factor involved in disassembly of spliceosomes after the release of mature mRNA. In cooperation with TFIP11 seem to be involved in the transition of the U2, U5 and U6 snRNP-containing IL complex to the snRNP-free IS complex leading to efficient debranching and turnover of excised introns. Plays a key role in antiviral innate immunity by promoting both MAVS-dependent signaling and NLRP6 inflammasome. Acts as an RNA virus sensor: recognizes and binds viral double stranded RNA (dsRNA) and activates the MAVS-dependent signaling to produce interferon-beta and interferon lambda-3 (IFNL3). Involved in intestinal antiviral innate immunity together with NLRP6: recognizes and binds viral dsRNA and promotes activation of the NLRP6 inflammasome in intestinal epithelial cells to restrict infection by enteric viruses. The NLRP6 inflammasome acts by promoting maturation and secretion of IL18 in the extracellular milieu. Also involved in antibacterial innate immunity by promoting Wnt-induced antimicrobial protein expression in Paneth cells. The polypeptide is ATP-dependent RNA helicase DHX15 (Homo sapiens (Human)).